The following is a 281-amino-acid chain: MAFRGRRPELRGPPELYYDKNEARKYVRNSRMIDVQIKMTGRALELLCVPEDKPCYVLDIGCGTGLSGDYLSDEGHYWVGIDISPAMLDEALDRETQGDVILGDMGQGIPFKPGTFDACISISAVQWLCNANKKSDIPAKRLYCFFSSLYSVLVRGGRAVLQLYPENSEQLELITTQATRAGFTGGVVVDYPNSAKAKKFYLCLFSGPSTSLPEGLSEDTEEEKPAESTFTADRIPYRIARRGVVRKSREWVLEKKARRRRQGKEVCPDTQYTGRKRKPRF.

The interval 256–281 is disordered; that stretch reads KARRRRQGKEVCPDTQYTGRKRKPRF.

It belongs to the class I-like SAM-binding methyltransferase superfamily. BUD23/WBSCR22 family. In terms of assembly, heterodimer with TRMT112; this heterodimerization is necessary for the metabolic stability and activity of the catalytic subunit BUD23. Interacts with GRIP1. May be ubiquitinated and targeted to degradation in response to pro-inflammatory cytokine signaling.

It localises to the nucleus. Its subcellular location is the nucleoplasm. The protein localises to the cytoplasm. The protein resides in the perinuclear region. It carries out the reaction a guanosine in 18S rRNA + S-adenosyl-L-methionine = an N(7)-methylguanosine in 18S rRNA + S-adenosyl-L-homocysteine. S-adenosyl-L-methionine-dependent methyltransferase that specifically methylates the N(7) position of a guanine in 18S rRNA. Requires the methyltransferase adapter protein TRM112 for full rRNA methyltransferase activity. Involved in the pre-rRNA processing steps leading to small-subunit rRNA production independently of its RNA-modifying catalytic activity. Important for biogenesis end export of the 40S ribosomal subunit independent on its methyltransferase activity. Locus-specific steroid receptor coactivator. Potentiates transactivation by glucocorticoid (NR3C1), mineralocorticoid (NR3C2), androgen (AR) and progesterone (PGR) receptors. Required for the maintenance of open chromatin at the TSC22D3/GILZ locus to facilitate NR3C1 loading on the response elements. Required for maintenance of dimethylation on histone H3 'Lys-79' (H3K79me2), although direct histone methyltransferase activity is not observed in vitro. The chain is 18S rRNA (guanine-N(7))-methyltransferase from Bos taurus (Bovine).